The following is a 687-amino-acid chain: Chloride channel protein ClC-Ka (687 aa).

4 consecutive transmembrane segments (helical) span residues 52-72 (FLMTLGVLMALISYAMNFALG), 161-181 (LFLGKVGPFVHLSVMIAAYLG), 202-222 (VAGAAVGVATVFAAPFSGVLF), and 236-256 (YWRGFFAATCGAFMFRLLAVF). Residues glutamate 259, glutamate 261, aspartate 278, and glutamate 281 each contribute to the Ca(2+) site. The next 6 membrane-spanning stretches (helical) occupy residues 282-302 (IFFFVLLGAICGVASCAYLYC), 325-345 (PLYAALAATVLASITYPPGVG), 396-416 (FTIFGTLAFFLVMKFWMLILA), 417-437 (TTIPMPAGYFLPIFIIGAAIG), 452-472 (IVAGGVINPIMPGGYALAGAA), and 486-506 (LLAFELTGQIVHALPVLMAVL). The Cytoplasmic segment spans residues 507 to 687 (AANAIAQSCQ…SALTNPPPAK (181 aa)). CBS domains follow at residues 551–612 (MRRA…ARAS) and 628–686 (TEPV…PPPA).

The protein belongs to the chloride channel (TC 2.A.49) family. CLCNKA subfamily. In terms of assembly, homodimer. Interacts with BSND. Expressed predominantly in the kidney.

The protein localises to the basolateral cell membrane. It carries out the reaction chloride(in) = chloride(out). The enzyme catalyses bromide(in) = bromide(out). The catalysed reaction is nitrate(in) = nitrate(out). It catalyses the reaction iodide(out) = iodide(in). In terms of biological role, anion-selective channel permeable to small monovalent anions with ion selectivity for chloride &gt; bromide &gt; nitrate &gt; iodide. Forms a homodimeric channel where each subunit has its own ion conduction pathway. May conduct double-barreled currents controlled by two types of gates, two fast gates that control each subunit independently and a slow common gate that opens and shuts off both subunits simultaneously. Assembles with the regulatory subunit BSND/Barttin for sorting at the basolateral plasma membrane domain and functional switch to the ion conducting state. CLCNKA:BSND channels display mostly a linear current-voltage relationship with fast gating at negative potentials. Mediates transepithelial chloride transport from the lumen to interstitial compartment along the thin ascending limb of Henle's loop, contributing to generation of hypertonic medullary interstitium as a countercurrent system to achieve urine concentration. Conducts chloride currents in the stria vascularis of the inner ear to establish the endocochlear potential necessary for normal hearing. The chain is Chloride channel protein ClC-Ka (CLCNKA) from Oryctolagus cuniculus (Rabbit).